Consider the following 389-residue polypeptide: Succinate--CoA ligase [ADP-forming] subunit beta (389 aa).

The ATP-grasp domain maps to 9–236 (KELFAKHEVP…KDATDPLELK (228 aa)). ATP is bound by residues Lys-45, 52–54 (GRG), Ser-94, and Glu-99. The Mg(2+) site is built by Asn-191 and Asp-205. Substrate is bound by residues Asn-256 and 318 to 320 (GIT).

It belongs to the succinate/malate CoA ligase beta subunit family. Heterotetramer of two alpha and two beta subunits. It depends on Mg(2+) as a cofactor.

The catalysed reaction is succinate + ATP + CoA = succinyl-CoA + ADP + phosphate. It catalyses the reaction GTP + succinate + CoA = succinyl-CoA + GDP + phosphate. It participates in carbohydrate metabolism; tricarboxylic acid cycle; succinate from succinyl-CoA (ligase route): step 1/1. Functionally, succinyl-CoA synthetase functions in the citric acid cycle (TCA), coupling the hydrolysis of succinyl-CoA to the synthesis of either ATP or GTP and thus represents the only step of substrate-level phosphorylation in the TCA. The beta subunit provides nucleotide specificity of the enzyme and binds the substrate succinate, while the binding sites for coenzyme A and phosphate are found in the alpha subunit. This is Succinate--CoA ligase [ADP-forming] subunit beta from Rhodococcus jostii (strain RHA1).